The primary structure comprises 282 residues: Complement component 1 Q subcomponent-binding protein, mitochondrial (282 aa).

A mitochondrion-targeting transit peptide spans 1 to 73; it reads MLPLLRCVPR…PCACGCGCGS (73 aa). Positions 76–93 are C1q binding; it reads TDGDKAFVDFLSDEIKEE. Serine 87 is modified (phosphoserine). Lysine 91 carries the post-translational modification N6-acetyllysine. Positions 138–164 are disordered; that stretch reads SIPPTFDGEEEPSQGQKVEEQEPELTS. Residues 168–213 are interaction with MAVS; that stretch reads FVVEVIKNDDGKKALVLDCHYPEDEVGQEDEAESDIFSIREVSFQS. Position 188 is a phosphotyrosine (tyrosine 188). Phosphoserine occurs at positions 201 and 205. Position 214 is a phosphothreonine (threonine 214).

It belongs to the MAM33 family. In terms of assembly, homotrimer; three monomers form a donut-shaped structure with an unusually asymmetric charge distribution on the surface. Interacts with CDK13, HRK, VTN, NFYB, ADRA1B, FOXC1, DDX21, DDX50, NCL, SRSF1, SRSF9 and CDKN2A isoform smARF. Interacts with CD93; the association may represent a cell surface C1q receptor. Interacts with KRT1; the association represents a cell surface kininogen receptor. Interacts with CD209; the interaction is indicative for a C1q:C1QBP:CD209 signaling complex. Interacts with FBL and RRP1; the respective interactions with C1QBP are competitive. Probably associates with the mitoribosome. Interacts with MAVS; the interaction occurs upon viral transfection. Interacts with PPIF. Interacts with U2AF1L4. Interacts with PLEKHN1. Interacts with VGF-derived peptide TLQP-21. Interacts with POLGARF which is produced from an alternative reading frame of the POLG gene; the interaction results in nucleolar localization of C1QBP, probably due to prevention of C1QBP maturation and redirection from mitochondria to nucleoli. Interacts with MRE11 and RAD50; forming the MRC (MRE11-RAD50-C1QBP) complex that inhibits the activity of MRE11. As to quaternary structure, (Microbial infection) Interacts with Rubella virus capsid protein; the interaction occurs in mitochondria. Interacts with Rubella virus protease/methyltransferase p150. (Microbial infection) Interacts with Staphylococcus aureus protein A/spa. In terms of assembly, (Microbial infection) Interacts with Staphylococcus aureus protein A/spa, HIV-1 Tat and HCV core protein. As to quaternary structure, (Microbial infection) Interacts with HIV-1 Tat and HCV core protein. (Microbial infection) Interacts with L.monocytogenes internalin B. In terms of assembly, (Microbial infection) Interacts with Epstein-Barr virus EBNA1. As to expression, expressed on cell surface of peripheral blood cells (at protein level); Surface expression is reported for macrophages and monocyte-derived dendritic cells.

The protein resides in the mitochondrion matrix. Its subcellular location is the nucleus. It localises to the nucleolus. It is found in the cell membrane. The protein localises to the secreted. The protein resides in the cytoplasm. Functionally, multifunctional and multicompartmental protein involved in inflammation and infection processes, ribosome biogenesis, protein synthesis in mitochondria, regulation of apoptosis, transcriptional regulation and pre-mRNA splicing. At the cell surface is thought to act as an endothelial receptor for plasma proteins of the complement and kallikrein-kinin cascades. Putative receptor for C1q; specifically binds to the globular 'heads' of C1q thus inhibiting C1; may perform the receptor function through a complex with C1qR/CD93. In complex with cytokeratin-1/KRT1 is a high affinity receptor for kininogen-1/HMWK. Can also bind other plasma proteins, such as coagulation factor XII leading to its autoactivation. May function to bind initially fluid kininogen-1 to the cell membrane. The secreted form may enhance both extrinsic and intrinsic coagulation pathways. It is postulated that the cell surface form requires docking with transmembrane proteins for downstream signaling which might be specific for a cell-type or response. By acting as C1q receptor is involved in chemotaxis of immature dendritic cells and neutrophils and is proposed to signal through CD209/DC-SIGN on immature dendritic cells, through integrin alpha-4/beta-1 during trophoblast invasion of the decidua, and through integrin beta-1 during endothelial cell adhesion and spreading. Signaling involved in inhibition of innate immune response is implicating the PI3K-AKT/PKB pathway. Required for protein synthesis in mitochondria. In mitochondrial translation may be involved in formation of functional 55S mitoribosomes; the function seems to involve its RNA-binding activity. Acts as a RNA modification reader, which specifically recognizes and binds mitochondrial RNAs modified by C5-methylcytosine (m5C) in response to stress, and promotes recruitment of the mitochondrial degradosome complex, leading to their degradation. May be involved in the nucleolar ribosome maturation process; the function may involve the exchange of FBL for RRP1 in the association with pre-ribosome particles. Involved in regulation of RNA splicing by inhibiting the RNA-binding capacity of SRSF1 and its phosphorylation. Is required for the nuclear translocation of splicing factor U2AF1L4. Involved in regulation of CDKN2A- and HRK-mediated apoptosis. Stabilizes mitochondrial CDKN2A isoform smARF. May be involved in regulation of FOXC1 transcriptional activity and NFY/CCAAT-binding factor complex-mediated transcription. May play a role in antibacterial defense as it can bind to cell surface hyaluronan and inhibit Streptococcus pneumoniae hyaluronate lyase. May be involved in modulation of the immune response; ligation by HCV core protein is resulting in suppression of interleukin-12 production in monocyte-derived dendritic cells. Involved in regulation of antiviral response by inhibiting RIGI- and IFIH1-mediated signaling pathways probably involving its association with MAVS after viral infection. Acts as a regulator of DNA repair via homologous recombination by inhibiting the activity of MRE11: interacts with unphosphorylated MRE11 and RAD50 in absence of DNA damage, preventing formation and activity of the MRN complex. Following DNA damage, dissociates from phosphorylated MRE11, allowing formation of the MRN complex. (Microbial infection) Involved in HIV-1 replication, presumably by contributing to splicing of viral RNA. Its function is as follows. (Microbial infection) In infection processes acts as an attachment site for microbial proteins, including Listeria monocytogenes internalin B (InlB) and Staphylococcus aureus protein A. In terms of biological role, (Microbial infection) Involved in replication of Rubella virus. This is Complement component 1 Q subcomponent-binding protein, mitochondrial (C1QBP) from Homo sapiens (Human).